Reading from the N-terminus, the 950-residue chain is Protocadherin alpha-9 (950 aa).

An N-terminal signal peptide occupies residues methionine 1–glycine 29. 6 Cadherin domains span residues glutamine 30 to phenylalanine 133, proline 134 to phenylalanine 242, aspartate 243 to leucine 350, threonine 351 to phenylalanine 455, alanine 456 to leucine 565, and glycine 588 to serine 678. Residues glutamine 30–asparagine 697 are Extracellular-facing. N-linked (GlcNAc...) asparagine glycans are attached at residues asparagine 254 and asparagine 265. N-linked (GlcNAc...) asparagine glycosylation is present at asparagine 548. Residues valine 698 to tyrosine 718 traverse the membrane as a helical segment. At threonine 719–glutamine 950 the chain is on the cytoplasmic side. The stretch at proline 734–proline 737 is one PXXP 1 repeat. Residues proline 734–proline 894 are 5 X 4 AA repeats of P-X-X-P. 2 disordered regions span residues cysteine 759–tyrosine 808 and isoleucine 827–glutamine 950. A compositionally biased stretch (polar residues) spans proline 789–lysine 798. PXXP repeat units follow at residues proline 799–proline 802, proline 832–proline 835, proline 873–proline 876, and proline 891–proline 894. A compositionally biased stretch (basic and acidic residues) spans aspartate 909–lysine 923.

It localises to the cell membrane. In terms of biological role, potential calcium-dependent cell-adhesion protein. May be involved in the establishment and maintenance of specific neuronal connections in the brain. The sequence is that of Protocadherin alpha-9 (PCDHA9) from Pan troglodytes (Chimpanzee).